The sequence spans 187 residues: GTP cyclohydrolase 1 (187 aa).

Residues cysteine 74, histidine 77, and cysteine 145 each contribute to the Zn(2+) site.

The protein belongs to the GTP cyclohydrolase I family. Homomer.

The catalysed reaction is GTP + H2O = 7,8-dihydroneopterin 3'-triphosphate + formate + H(+). The protein operates within cofactor biosynthesis; 7,8-dihydroneopterin triphosphate biosynthesis; 7,8-dihydroneopterin triphosphate from GTP: step 1/1. The chain is GTP cyclohydrolase 1 from Sulfurihydrogenibium sp. (strain YO3AOP1).